The sequence spans 327 residues: Clavesin-2 (327 aa).

The CRAL-TRIO domain occupies 96–257 (IKQALKDGFP…EFGGMLPPYD (162 aa)). Positions 287 to 327 (EVEKELSPKSMKRSQSVVDPTVLKRMDKNEEENMQPLLSLD) are disordered. Residue Ser325 is modified to Phosphoserine.

Forms a complex with clathrin heavy chain and gamma-adaptin.

The protein resides in the golgi apparatus. It is found in the trans-Golgi network membrane. It localises to the cytoplasmic vesicle. Its subcellular location is the clathrin-coated vesicle. The protein localises to the early endosome membrane. Functionally, required for normal morphology of late endosomes and/or lysosomes in neurons. Binds phosphatidylinositol 3,5-bisphosphate (PtdIns(3,5)P2). The sequence is that of Clavesin-2 (CLVS2) from Homo sapiens (Human).